Reading from the N-terminus, the 295-residue chain is NAD kinase (295 aa).

Catalysis depends on D72, which acts as the Proton acceptor. Residues 72–73 (DG), 146–147 (ND), R157, K174, D176, 187–192 (TAYALS), and Q247 each bind NAD(+).

It belongs to the NAD kinase family. The cofactor is a divalent metal cation.

It localises to the cytoplasm. It catalyses the reaction NAD(+) + ATP = ADP + NADP(+) + H(+). Functionally, involved in the regulation of the intracellular balance of NAD and NADP, and is a key enzyme in the biosynthesis of NADP. Catalyzes specifically the phosphorylation on 2'-hydroxyl of the adenosine moiety of NAD to yield NADP. This is NAD kinase from Pseudomonas aeruginosa (strain LESB58).